The following is a 565-amino-acid chain: DNA ligase B (565 aa).

The active-site N6-AMP-lysine intermediate is the lysine 130.

The protein belongs to the NAD-dependent DNA ligase family. LigB subfamily.

It catalyses the reaction NAD(+) + (deoxyribonucleotide)n-3'-hydroxyl + 5'-phospho-(deoxyribonucleotide)m = (deoxyribonucleotide)n+m + AMP + beta-nicotinamide D-nucleotide.. Its function is as follows. Catalyzes the formation of phosphodiester linkages between 5'-phosphoryl and 3'-hydroxyl groups in double-stranded DNA using NAD as a coenzyme and as the energy source for the reaction. In Yersinia enterocolitica serotype O:8 / biotype 1B (strain NCTC 13174 / 8081), this protein is DNA ligase B.